The primary structure comprises 324 residues: ATP-dependent 6-phosphofructokinase (324 aa).

Gly11 is an ATP binding site. Residue 21-25 participates in ADP binding; the sequence is RAVVR. Residues 72 to 73 and 102 to 105 contribute to the ATP site; these read RE and GNGS. Asn103 lines the Mg(2+) pocket. 126–128 serves as a coordination point for substrate; the sequence is TID. The Proton acceptor role is filled by Asp128. Residue Lys155 participates in ADP binding. Substrate contacts are provided by residues Arg163 and 170–172; that span reads MGR. Residues 186–188 and 214–216 contribute to the ADP site; these read GAE and KNF. Substrate-binding positions include Glu223, Arg248, and 254–257; that span reads YIQR.

Belongs to the phosphofructokinase type A (PFKA) family. ATP-dependent PFK group I subfamily. Prokaryotic clade 'B1' sub-subfamily. In terms of assembly, homotetramer. Requires Mg(2+) as cofactor.

It localises to the cytoplasm. The enzyme catalyses beta-D-fructose 6-phosphate + ATP = beta-D-fructose 1,6-bisphosphate + ADP + H(+). It participates in carbohydrate degradation; glycolysis; D-glyceraldehyde 3-phosphate and glycerone phosphate from D-glucose: step 3/4. Allosterically activated by ADP and other diphosphonucleosides, and allosterically inhibited by phosphoenolpyruvate. In terms of biological role, catalyzes the phosphorylation of D-fructose 6-phosphate to fructose 1,6-bisphosphate by ATP, the first committing step of glycolysis. The protein is ATP-dependent 6-phosphofructokinase of Sulfurihydrogenibium sp. (strain YO3AOP1).